The chain runs to 311 residues: Ribosomal RNA small subunit methyltransferase H (311 aa).

S-adenosyl-L-methionine is bound by residues Ala32–His34, Asp52, Phe79, Asp100, and Gln107. Residues Ser289–Arg298 show a composition bias toward basic and acidic residues. The disordered stretch occupies residues Ser289–Lys311. Residues Arg300 to Lys311 are compositionally biased toward basic residues.

Belongs to the methyltransferase superfamily. RsmH family.

The protein localises to the cytoplasm. It catalyses the reaction cytidine(1402) in 16S rRNA + S-adenosyl-L-methionine = N(4)-methylcytidine(1402) in 16S rRNA + S-adenosyl-L-homocysteine + H(+). Its function is as follows. Specifically methylates the N4 position of cytidine in position 1402 (C1402) of 16S rRNA. This Bacillus velezensis (strain DSM 23117 / BGSC 10A6 / LMG 26770 / FZB42) (Bacillus amyloliquefaciens subsp. plantarum) protein is Ribosomal RNA small subunit methyltransferase H.